Consider the following 516-residue polypeptide: rRNA N(6)-adenosine-methyltransferase ZCCHC4 (516 aa).

Zn(2+)-binding residues include cysteine 40, histidine 42, cysteine 66, cysteine 75, cysteine 127, cysteine 130, histidine 142, and histidine 145. The GRF-type zinc-finger motif lies at 40–84 (CPHELGPTLLFVKVNQGKEETRRFYACSACRDRKDCNFFQWEDEK). Residues 174 to 177 (QYLF), arginine 204, aspartate 227, 245 to 246 (NM), and aspartate 278 contribute to the S-adenosyl-L-methionine site. Residues 339–360 (QVVDYDNHALYKHGKTGRKQSP) are regulatory loop. Zn(2+)-binding residues include cysteine 383, cysteine 386, histidine 396, cysteine 397, cysteine 400, cysteine 403, histidine 413, cysteine 414, cysteine 417, cysteine 420, histidine 427, cysteine 428, cysteine 431, cysteine 434, histidine 439, and cysteine 441. The 51-residue stretch at 398 to 448 (EHCNSCTSKDGRKWNHCFLCKKCVKPSWIHCSICNHCALPDHSCKGPKDGC) folds into the DHHC domain. The CCHC-type zinc-finger motif lies at 446-463 (DGCFICGELDHKRSACPN). The span at 472–484 (KAVRKQKQRKSNK) shows a compositional bias: basic residues. The tract at residues 472-516 (KAVRKQKQRKSNKMKMETTKGQSMNHTSATRKKKRRERTHQYLCS) is disordered. The segment covering 490 to 499 (TKGQSMNHTS) has biased composition (polar residues). The segment covering 500 to 509 (ATRKKKRRER) has biased composition (basic residues).

Belongs to the ZCCHC4 family. As to quaternary structure, interacts with components of the ASC-1 complex TRIP4, ASCC1, ASCC2 and ASCC3. Interact with AHCYL1 and AHCYL2. Interact with YTHDC2.

It is found in the cytoplasm. It localises to the nucleus. The protein resides in the nucleolus. The catalysed reaction is adenosine(4220) in 28S rRNA + S-adenosyl-L-methionine = N(6)-methyladenosine(4220) in 28S rRNA + S-adenosyl-L-homocysteine + H(+). RRNA N6-methyltransferase that specifically methylates the adenine in position 4220 of 28S rRNA. N6-methylation of adenine(4220) in 28S rRNA is required for translation. This is rRNA N(6)-adenosine-methyltransferase ZCCHC4 from Bos taurus (Bovine).